A 354-amino-acid chain; its full sequence is N-acetyl-gamma-glutamyl-phosphate reductase (354 aa).

Cys-156 is an active-site residue.

This sequence belongs to the NAGSA dehydrogenase family. Type 1 subfamily.

Its subcellular location is the cytoplasm. The enzyme catalyses N-acetyl-L-glutamate 5-semialdehyde + phosphate + NADP(+) = N-acetyl-L-glutamyl 5-phosphate + NADPH + H(+). It functions in the pathway amino-acid biosynthesis; L-arginine biosynthesis; N(2)-acetyl-L-ornithine from L-glutamate: step 3/4. Its function is as follows. Catalyzes the NADPH-dependent reduction of N-acetyl-5-glutamyl phosphate to yield N-acetyl-L-glutamate 5-semialdehyde. This Bordetella bronchiseptica (strain ATCC BAA-588 / NCTC 13252 / RB50) (Alcaligenes bronchisepticus) protein is N-acetyl-gamma-glutamyl-phosphate reductase.